A 215-amino-acid chain; its full sequence is Probable transaldolase (215 aa).

Lysine 83 serves as the catalytic Schiff-base intermediate with substrate.

It belongs to the transaldolase family. Type 3B subfamily.

It localises to the cytoplasm. It carries out the reaction D-sedoheptulose 7-phosphate + D-glyceraldehyde 3-phosphate = D-erythrose 4-phosphate + beta-D-fructose 6-phosphate. Its pathway is carbohydrate degradation; pentose phosphate pathway; D-glyceraldehyde 3-phosphate and beta-D-fructose 6-phosphate from D-ribose 5-phosphate and D-xylulose 5-phosphate (non-oxidative stage): step 2/3. Functionally, transaldolase is important for the balance of metabolites in the pentose-phosphate pathway. This chain is Probable transaldolase, found in Clostridium kluyveri (strain NBRC 12016).